Consider the following 288-residue polypeptide: uncharacterized protein (288 aa).

The segment covering 1-12 (MTEGRCAQHPDG) has biased composition (basic and acidic residues). Residues 1–20 (MTEGRCAQHPDGLDVQDVCD) form a disordered region.

The protein belongs to the class IV-like SAM-binding methyltransferase superfamily. RNA methyltransferase TrmH family.

This is an uncharacterized protein from Mycobacterium bovis (strain ATCC BAA-935 / AF2122/97).